A 188-amino-acid chain; its full sequence is Pyridoxal 5'-phosphate synthase subunit PdxT (188 aa).

L-glutamine is bound at residue 46–48 (GES). Catalysis depends on cysteine 78, which acts as the Nucleophile. Residues arginine 105 and 134–135 (IR) contribute to the L-glutamine site. Residues histidine 170 and glutamate 172 each act as charge relay system in the active site.

This sequence belongs to the glutaminase PdxT/SNO family. In the presence of PdxS, forms a dodecamer of heterodimers. Only shows activity in the heterodimer.

The catalysed reaction is aldehydo-D-ribose 5-phosphate + D-glyceraldehyde 3-phosphate + L-glutamine = pyridoxal 5'-phosphate + L-glutamate + phosphate + 3 H2O + H(+). It catalyses the reaction L-glutamine + H2O = L-glutamate + NH4(+). It participates in cofactor biosynthesis; pyridoxal 5'-phosphate biosynthesis. Catalyzes the hydrolysis of glutamine to glutamate and ammonia as part of the biosynthesis of pyridoxal 5'-phosphate. The resulting ammonia molecule is channeled to the active site of PdxS. This chain is Pyridoxal 5'-phosphate synthase subunit PdxT, found in Clostridium kluyveri (strain ATCC 8527 / DSM 555 / NBRC 12016 / NCIMB 10680 / K1).